The primary structure comprises 495 residues: Internal alternative NAD(P)H-ubiquinone oxidoreductase A1, mitochondrial (495 aa).

Residues 1-41 constitute a mitochondrion transit peptide; sequence MPWFKNLIKISKTITNQSSSYKSITPLASPLLTQFLQFTKQ. An FAD-binding site is contributed by 61 to 91; sequence RIVVLGSGWAGCRLMKDIDTNIYDVVCVSPR. 228–264 contributes to the NAD(+) binding site; that stretch reads LHCVVVGGGPTGVEFSGELSDFILKDVHQRYAHVKDY. Residues 486 to 495 carry the Microbody targeting signal motif; that stretch reads LVFGRDISRI.

It belongs to the NADH dehydrogenase family. FAD is required as a cofactor.

The protein resides in the mitochondrion inner membrane. The protein localises to the peroxisome. It catalyses the reaction a quinone + NADH + H(+) = a quinol + NAD(+). The catalysed reaction is a ubiquinone + NADH + H(+) = a ubiquinol + NAD(+). In terms of biological role, alternative NADH-ubiquinone oxidoreductase which catalyzes the oxidation of mitochondrial NADH does not translocate protons across the inner mitochondrial membrane. This is Internal alternative NAD(P)H-ubiquinone oxidoreductase A1, mitochondrial (NDA1) from Solanum tuberosum (Potato).